The following is a 220-amino-acid chain: Octanoyltransferase (220 aa).

The BPL/LPL catalytic domain maps to 31-217 (ENTPDEIWLV…HFAEILGYNA (187 aa)). Substrate is bound by residues 70 to 77 (RGGQITYH), 146 to 148 (SLG), and 159 to 161 (GLA). Cys-177 (acyl-thioester intermediate) is an active-site residue.

The protein belongs to the LipB family.

It localises to the cytoplasm. The enzyme catalyses octanoyl-[ACP] + L-lysyl-[protein] = N(6)-octanoyl-L-lysyl-[protein] + holo-[ACP] + H(+). Its pathway is protein modification; protein lipoylation via endogenous pathway; protein N(6)-(lipoyl)lysine from octanoyl-[acyl-carrier-protein]: step 1/2. Catalyzes the transfer of endogenously produced octanoic acid from octanoyl-acyl-carrier-protein onto the lipoyl domains of lipoate-dependent enzymes. Lipoyl-ACP can also act as a substrate although octanoyl-ACP is likely to be the physiological substrate. The sequence is that of Octanoyltransferase from Actinobacillus succinogenes (strain ATCC 55618 / DSM 22257 / CCUG 43843 / 130Z).